The sequence spans 917 residues: Nitrate reductase [NADH] 2 (917 aa).

Residues 1 to 72 (MAASVDNRQY…SEDENETHNS (72 aa)) form a disordered region. Positions 37 to 47 (AHQNQTTNQTV) are enriched in polar residues. Over residues 57–67 (DDEDVSSEDEN) the composition is skewed to acidic residues. Cys-191 contributes to the Mo-molybdopterin binding site. One can recognise a Cytochrome b5 heme-binding domain in the interval 542 to 617 (AKMYSMSEVK…LEDYRIGELI (76 aa)). Heme is bound by residues His-577 and His-600. The FAD-binding FR-type domain occupies 660-772 (RAKVPVQLVE…KGPLGHVEYL (113 aa)). Residues 712–715 (RAYT), 729–733 (VVKIY), Phe-734, Phe-741, 746–748 (LMS), and Thr-799 contribute to the FAD site.

It belongs to the nitrate reductase family. As to quaternary structure, homodimer. FAD serves as cofactor. Requires heme as cofactor. Mo-molybdopterin is required as a cofactor. Root, leaf, and shoot.

It catalyses the reaction nitrite + NAD(+) + H2O = nitrate + NADH + H(+). In terms of biological role, nitrate reductase is a key enzyme involved in the first step of nitrate assimilation in plants, fungi and bacteria. The chain is Nitrate reductase [NADH] 2 (NIA2) from Arabidopsis thaliana (Mouse-ear cress).